The chain runs to 441 residues: VGFKAGVKDYKLTYYTPDYETKDTDILAAFRVTPQPGVPPEEAGAAVAAESSTGTWTTVWTDGLTSLDRYKGRCYHIEPVAGEENQYIAYVAYPLDLFEEGSVTNMFTSIVGNVFGFKALRALRLEDLRIPPAYSKTFQGPPHGIQVERDKLNKYGRPLLGCTIKPKLGLSAKNYGRAVYECLRGGLDFTKDDENVNSQPFMRWRDRFLFCAEAIYKAQAETGEIKGHYLNATAGTCEEMIKRAVFARELGVPIVMHDYLTGGFTANTSLSHYCRDNGLLLHIHRAMHAVIDRQKNHGIHFRVLAKALRMSGGDHIHSGTVVGKLEGERDITLGFVDLLRDDYIEKDRARGIYFSQDWVSLPGVLPVASGGIHVWHMPALTEIFGDDSVLQFGGGTLGHPWGNAPGAVANRVALEACVQARNEGRDLAREGNEIIREARKW.

The residue at position 4 (K4) is an N6,N6,N6-trimethyllysine. Residues N113 and T163 each contribute to the substrate site. The active-site Proton acceptor is the K165. K167 contacts substrate. Residues K191, D193, and E194 each coordinate Mg(2+). K191 is modified (N6-carboxylysine). H284 functions as the Proton acceptor in the catalytic mechanism. Positions 285, 317, and 369 each coordinate substrate.

The protein belongs to the RuBisCO large chain family. Type I subfamily. In terms of assembly, heterohexadecamer of 8 large chains and 8 small chains; disulfide-linked. The disulfide link is formed within the large subunit homodimers. Mg(2+) is required as a cofactor. In terms of processing, the disulfide bond which can form in the large chain dimeric partners within the hexadecamer appears to be associated with oxidative stress and protein turnover.

It localises to the plastid. It is found in the chloroplast. The catalysed reaction is 2 (2R)-3-phosphoglycerate + 2 H(+) = D-ribulose 1,5-bisphosphate + CO2 + H2O. It catalyses the reaction D-ribulose 1,5-bisphosphate + O2 = 2-phosphoglycolate + (2R)-3-phosphoglycerate + 2 H(+). Its function is as follows. RuBisCO catalyzes two reactions: the carboxylation of D-ribulose 1,5-bisphosphate, the primary event in carbon dioxide fixation, as well as the oxidative fragmentation of the pentose substrate in the photorespiration process. Both reactions occur simultaneously and in competition at the same active site. The chain is Ribulose bisphosphate carboxylase large chain from Darlingtonia californica (California pitcher plant).